The sequence spans 95 residues: ATP-dependent Clp protease adapter protein ClpS (95 aa).

Belongs to the ClpS family. Binds to the N-terminal domain of the chaperone ClpA.

Functionally, involved in the modulation of the specificity of the ClpAP-mediated ATP-dependent protein degradation. This chain is ATP-dependent Clp protease adapter protein ClpS, found in Synechococcus elongatus (strain ATCC 33912 / PCC 7942 / FACHB-805) (Anacystis nidulans R2).